The primary structure comprises 229 residues: MAVERKFVQERLKKLMVKEWIKDEVRSAGFGGVDILRTPLGTQVTLFVERPGLVIGKGGRRIKALTEKLKDFGIENPQVSVDEVEKPEFNAQLMASLLARALERGWYFRRAGYRFLYRIMEAGAKGCEIEISGKLVSERARTEKFVAGTIVHTGDPAESMVQKGFDIAIKKLGVLGVSVRIIPPDVTLPDEFEVKDVNIEHLRGESGEDEGDKGDEQGGEAQEAEGAGA.

In terms of domain architecture, KH type-2 spans Val17–Glu85. Residues Leu202–Ala229 are disordered. Residues Gly219–Ala229 are compositionally biased toward low complexity.

This sequence belongs to the universal ribosomal protein uS3 family. In terms of assembly, part of the 30S ribosomal subunit.

In terms of biological role, binds the lower part of the 30S subunit head. In Archaeoglobus fulgidus (strain ATCC 49558 / DSM 4304 / JCM 9628 / NBRC 100126 / VC-16), this protein is Small ribosomal subunit protein uS3.